Reading from the N-terminus, the 458-residue chain is Phosphoglucosamine mutase (458 aa).

Residue Ser109 is the Phosphoserine intermediate of the active site. Residues Ser109, Asp251, Asp253, and Asp255 each contribute to the Mg(2+) site. Ser109 is subject to Phosphoserine.

This sequence belongs to the phosphohexose mutase family. Mg(2+) serves as cofactor. In terms of processing, activated by phosphorylation.

The catalysed reaction is alpha-D-glucosamine 1-phosphate = D-glucosamine 6-phosphate. Its function is as follows. Catalyzes the conversion of glucosamine-6-phosphate to glucosamine-1-phosphate. This is Phosphoglucosamine mutase from Myxococcus xanthus (strain DK1622).